A 177-amino-acid chain; its full sequence is Large ribosomal subunit protein uL6 (177 aa).

It belongs to the universal ribosomal protein uL6 family. Part of the 50S ribosomal subunit.

In terms of biological role, this protein binds to the 23S rRNA, and is important in its secondary structure. It is located near the subunit interface in the base of the L7/L12 stalk, and near the tRNA binding site of the peptidyltransferase center. The protein is Large ribosomal subunit protein uL6 of Brucella anthropi (strain ATCC 49188 / DSM 6882 / CCUG 24695 / JCM 21032 / LMG 3331 / NBRC 15819 / NCTC 12168 / Alc 37) (Ochrobactrum anthropi).